The chain runs to 999 residues: Probable beta-galactosidase C (999 aa).

A signal peptide spans 1-21 (MFFFRFLTTVLLLFNAKLLVA). The N-linked (GlcNAc...) asparagine glycan is linked to Asn25. Substrate is bound by residues Tyr80, Asn125, Glu127, and Asn185. Glu186 (proton donor) is an active-site residue. An N-linked (GlcNAc...) asparagine glycan is attached at Asn195. Tyr249 is a binding site for substrate. Cysteines 255 and 302 form a disulfide. Residue Asn274 is glycosylated (N-linked (GlcNAc...) asparagine). The active-site Nucleophile is the Glu285. Tyr351 is a binding site for substrate. Residues Asn389, Asn441, Asn512, Asn519, Asn600, Asn675, Asn713, Asn757, Asn808, and Asn897 are each glycosylated (N-linked (GlcNAc...) asparagine).

The protein belongs to the glycosyl hydrolase 35 family.

Its subcellular location is the secreted. The enzyme catalyses Hydrolysis of terminal non-reducing beta-D-galactose residues in beta-D-galactosides.. Cleaves beta-linked terminal galactosyl residues from gangliosides, glycoproteins, and glycosaminoglycans. In Talaromyces marneffei (strain ATCC 18224 / CBS 334.59 / QM 7333) (Penicillium marneffei), this protein is Probable beta-galactosidase C (lacC).